The primary structure comprises 68 residues: Protein transport protein Sec61 subunit gamma (68 aa).

The Cytoplasmic segment spans residues 1 to 32; it reads MDQVTKFIEPGRQFAKDSIRLVKRCTKPDRKE. A helical transmembrane segment spans residues 33 to 61; sequence FQKIAVATAIGFCIMGFIGFFVKLIHIPI. The Extracellular segment spans residues 62-68; that stretch reads NNIIVGS.

The protein belongs to the SecE/SEC61-gamma family. As to quaternary structure, heterotrimeric complex composed of SEC61-alpha, SEC61-beta and SEC61-gamma.

It localises to the endoplasmic reticulum membrane. In terms of biological role, necessary for protein translocation in the endoplasmic reticulum. The polypeptide is Protein transport protein Sec61 subunit gamma (SEC61G) (Gryllotalpa orientalis (Oriental mole cricket)).